We begin with the raw amino-acid sequence, 687 residues long: Probable ATP-dependent RNA helicase Dbp73D (687 aa).

Disordered stretches follow at residues Met1 to Glu26 and Thr52 to Val87. Composition is skewed to basic and acidic residues over residues Tyr9–Asp18 and Ile54–Leu79. The short motif at Leu160–Ile168 is the Q motif element. The 205-residue stretch at Lys177 to Phe381 folds into the Helicase ATP-binding domain. Ala190–Thr197 provides a ligand contact to ATP. The short motif at Asp305 to Asp308 is the DEAD box element. Residues Thr434–Ile583 enclose the Helicase C-terminal domain. The tract at residues Ile646–Lys675 is disordered. Basic and acidic residues predominate over residues Lys652–Lys675.

It belongs to the DEAD box helicase family. DDX51/DBP6 subfamily. In terms of tissue distribution, expressed in the germline tissue of the ovary.

It localises to the nucleus. The protein resides in the nucleolus. The enzyme catalyses ATP + H2O = ADP + phosphate + H(+). Functionally, ATP-binding RNA helicase involved in the biogenesis of 60S ribosomal subunits. This chain is Probable ATP-dependent RNA helicase Dbp73D (Dbp73D), found in Drosophila melanogaster (Fruit fly).